The primary structure comprises 591 residues: uncharacterized protein (591 aa).

The signal sequence occupies residues Met-1–Ala-30. The N-palmitoyl cysteine moiety is linked to residue Cys-31. A lipid anchor (S-diacylglycerol cysteine) is attached at Cys-31. Over residues Lys-476–Glu-488 the composition is skewed to basic and acidic residues. Disordered stretches follow at residues Lys-476–Asn-497 and Ser-510–Gly-535. Residues Ser-510–Ser-523 are compositionally biased toward low complexity.

To T.pallidum TmpC.

It is found in the cell membrane. This is an uncharacterized protein from Mycoplasma genitalium (strain ATCC 33530 / DSM 19775 / NCTC 10195 / G37) (Mycoplasmoides genitalium).